The following is a 367-amino-acid chain: Serine/threonine-protein phosphatase 2A activator 2 (367 aa).

The protein belongs to the PTPA-type PPIase family.

The protein resides in the cytoplasm. It carries out the reaction [protein]-peptidylproline (omega=180) = [protein]-peptidylproline (omega=0). In terms of biological role, PPIases accelerate the folding of proteins. It catalyzes the cis-trans isomerization of proline imidic peptide bonds in oligopeptides. Acts as a regulatory subunit for PP2A-like phosphatases modulating their activity or substrate specificity, probably by inducing a conformational change in the catalytic subunit, a direct target of the PPIase. Can reactivate inactive phosphatase PP2A-phosphatase methylesterase complexes (PP2Ai) in presence of ATP and Mg(2+) by dissociating the inactive form from the complex. The protein is Serine/threonine-protein phosphatase 2A activator 2 (RRD2) of Debaryomyces hansenii (strain ATCC 36239 / CBS 767 / BCRC 21394 / JCM 1990 / NBRC 0083 / IGC 2968) (Yeast).